Here is a 264-residue protein sequence, read N- to C-terminus: Meiotically up-regulated gene 162 protein (264 aa).

7 helical membrane passes run 18–38 (IVIF…WNLK), 54–74 (LWIY…AGSA), 84–104 (VFQV…GYSF), 140–160 (IISI…LLFL), 174–194 (HLSY…IKLI), 199–219 (FVLG…SLIT), and 223–243 (LISY…IWIY).

It localises to the endoplasmic reticulum membrane. In terms of biological role, has a role in meiosis. This is Meiotically up-regulated gene 162 protein (mug162) from Schizosaccharomyces pombe (strain 972 / ATCC 24843) (Fission yeast).